The chain runs to 666 residues: ATP synthase subunit alpha 2 (666 aa).

182–189 contacts ATP; that stretch reads GDRATGKT. Residues 527–666 are disordered; the sequence is MPAEDAAGDI…DAEAEARHKR (140 aa). A compositionally biased stretch (basic and acidic residues) spans 545 to 590; that stretch reads ARGDADRDADHGANREVSREVSPEASREVSREVSCEVSHEADRDAA. Residues 591-601 show a composition bias toward low complexity; the sequence is ADAARVAGRAP. The segment covering 623–641 has biased composition (basic and acidic residues); sequence ADGDRASASRPRPDARGDA.

The protein belongs to the ATPase alpha/beta chains family. F-type ATPases have 2 components, CF(1) - the catalytic core - and CF(0) - the membrane proton channel. CF(1) has five subunits: alpha(3), beta(3), gamma(1), delta(1), epsilon(1). CF(0) has three main subunits: a(1), b(2) and c(9-12). The alpha and beta chains form an alternating ring which encloses part of the gamma chain. CF(1) is attached to CF(0) by a central stalk formed by the gamma and epsilon chains, while a peripheral stalk is formed by the delta and b chains.

It localises to the cell inner membrane. It catalyses the reaction ATP + H2O + 4 H(+)(in) = ADP + phosphate + 5 H(+)(out). Its function is as follows. Produces ATP from ADP in the presence of a proton gradient across the membrane. The alpha chain is a regulatory subunit. The sequence is that of ATP synthase subunit alpha 2 from Burkholderia pseudomallei (strain K96243).